The following is a 171-amino-acid chain: Large ribosomal subunit protein uL10 (171 aa).

The protein belongs to the universal ribosomal protein uL10 family. In terms of assembly, part of the ribosomal stalk of the 50S ribosomal subunit. The N-terminus interacts with L11 and the large rRNA to form the base of the stalk. The C-terminus forms an elongated spine to which L12 dimers bind in a sequential fashion forming a multimeric L10(L12)X complex.

Its function is as follows. Forms part of the ribosomal stalk, playing a central role in the interaction of the ribosome with GTP-bound translation factors. This Hyphomonas neptunium (strain ATCC 15444) protein is Large ribosomal subunit protein uL10.